Reading from the N-terminus, the 320-residue chain is Biotin synthase 2 (320 aa).

The 228-residue stretch at 34–261 (NVVQCSKLLS…ASYVRLSAGR (228 aa)) folds into the Radical SAM core domain. [4Fe-4S] cluster is bound by residues Cys49, Cys53, and Cys56. Residues Cys93, Cys124, Cys184, and Arg256 each coordinate [2Fe-2S] cluster.

The protein belongs to the radical SAM superfamily. Biotin synthase family. Homodimer. [4Fe-4S] cluster serves as cofactor. It depends on [2Fe-2S] cluster as a cofactor.

It carries out the reaction (4R,5S)-dethiobiotin + (sulfur carrier)-SH + 2 reduced [2Fe-2S]-[ferredoxin] + 2 S-adenosyl-L-methionine = (sulfur carrier)-H + biotin + 2 5'-deoxyadenosine + 2 L-methionine + 2 oxidized [2Fe-2S]-[ferredoxin]. It functions in the pathway cofactor biosynthesis; biotin biosynthesis; biotin from 7,8-diaminononanoate: step 2/2. Functionally, catalyzes the conversion of dethiobiotin (DTB) to biotin by the insertion of a sulfur atom into dethiobiotin via a radical-based mechanism. In Paracoccus denitrificans (strain Pd 1222), this protein is Biotin synthase 2.